The primary structure comprises 1320 residues: Myopalladin (1320 aa).

Residues 1-522 (MQDDSIEAST…FTCTASNKYG (522 aa)) form an interaction with CARP region. Disordered regions lie at residues 19-68 (SYLA…AFLS), 84-145 (NYDP…SETQ), and 165-271 (FKSH…PPRF). Basic and acidic residues-rich tracts occupy residues 23–35 (ETRH…RSRA) and 87–106 (PLEK…DQMK). Serine 101 carries the phosphoserine modification. The span at 107 to 130 (HSPNLSFEPNFCQDNPRSPTSSKE) shows a compositional bias: polar residues. Serine 131 is subject to Phosphoserine. The segment covering 168 to 182 (HSSKRIRPRACKNHK) has biased composition (basic residues). Residues 186–201 (ESQNKVMQENSSSFSD) show a composition bias toward polar residues. Basic and acidic residues predominate over residues 218–239 (DTRDNEVNHALEQQEAKRREAE). The stretch at 219 to 248 (TRDNEVNHALEQQEAKRREAEQAASEAAGG) forms a coiled coil. Low complexity predominate over residues 240–258 (QAASEAAGGDTTPGSSPSS). A Phosphothreonine modification is found at threonine 251. Ig-like domains lie at 269 to 359 (PRFT…IYIE) and 435 to 531 (PVFT…AQLH). Cystine bridges form between cysteine 290/cysteine 341 and cysteine 456/cysteine 515. Residues 554-655 (AAIEPQPSPP…VKEPPPVLAK (102 aa)) are disordered. The span at 559–575 (QPSPPHSEPPSVEQPPK) shows a compositional bias: pro residues. Phosphoserine is present on serine 644. Positions 649 to 677 (PPPVLAKPKLDSTQLQQLHNQVLLEQHQL) are interaction with NEB. Residue serine 759 is modified to Phosphoserine. Residues 763-805 (LLVSHPSVQTKSPGGLSIQNEPLPPGPTEPTPPPFTFSIPSGN) form a disordered region. The segment covering 768–782 (PSVQTKSPGGLSIQN) has biased composition (polar residues). Over residues 784-797 (PLPPGPTEPTPPPF) the composition is skewed to pro residues. A phosphoserine mark is found at serine 813, serine 818, serine 867, serine 907, and serine 928. A disordered region spans residues 844-876 (NAMGLPRSAPSMPSQGLAKKNTKSPQPVNDDNI). Ig-like domains lie at 945–1029 (PIFD…GRIS), 1073–1162 (PHFL…LELS), and 1172–1262 (PVIL…ARLD). The segment at 945–1320 (PIFDKRLKHF…SRSVVESDEL (376 aa)) is interaction with ACTN. A disulfide bond links cysteine 1094 and cysteine 1146.

The protein belongs to the myotilin/palladin family. In terms of assembly, interacts with TTN/titin, NEB, NEBL, ACTN2 and CARP. In terms of tissue distribution, expressed in adult skeletal muscle and fetal heart.

It is found in the cytoplasm. The protein resides in the nucleus. The protein localises to the myofibril. Its subcellular location is the sarcomere. It localises to the z line. Component of the sarcomere that tethers together nebulin (skeletal muscle) and nebulette (cardiac muscle) to alpha-actinin, at the Z lines. This Homo sapiens (Human) protein is Myopalladin (MYPN).